The sequence spans 259 residues: Oxidase ustYb (259 aa).

A helical transmembrane segment spans residues 36 to 56; it reads IIYTSLAFVGFIEILFFGIFF. N-linked (GlcNAc...) asparagine glycosylation is found at asparagine 102 and asparagine 122. 2 consecutive short sequence motifs (HXXHC) follow at residues 147 to 151 and 197 to 201; these read HQLHC and HVDHC.

The protein belongs to the ustYa family.

It is found in the membrane. Its pathway is mycotoxin biosynthesis. Oxidase; part of the gene cluster that mediates the biosynthesis of the secondary metabolite ustiloxin B, an antimitotic tetrapeptide. First, ustA is processed by the subtilisin-like endoprotease Kex2 that is outside the ustiloxin B gene cluster, at the C-terminal side of Arg-Lys, after transfer to Golgi apparatus through the endoplasmic reticulum (ER). Cleavage by KEX2 generates 16 peptides YAIG-I to YAIG-XVI. To process the precursor peptide further, at least two peptidases are necessary to cleave the N-terminal and C-terminal sides of the Tyr-Ala-Ile-Gly core peptide which serves as backbone for the synthesis of ustiloxin B, through cyclization and modification of the tyrosine with a non-protein coding amino acid, norvaline. One of the two peptidases must be the serine peptidase ustP; and the other pepdidase is probably ustH. Macrocyclization of the core peptide derived from ustA requires the tyrosinase ustQ, as well as the homologous oxidases ustYa and ustYb, and leads to the production of the first cyclization product N-desmethylustiloxin F. For the formation of N-desmethylustiloxin F, three oxidation steps are required, hydroxylation at the benzylic position, hydroxylation at either the aromatic ring of Tyr or beta-position of Ile, and oxidative cyclization. UstQ may catalyze the oxidation of a phenol moiety, whereas the ustYa and ustYb are most likely responsible for the remaining two-step oxidations. N-desmethylustiloxin F is then methylated by ustM to yield ustiloxin F which in turn substrate of the cytochrome P450 monooxygenase ustC which catalyzes the formation of S-deoxyustiloxin H. The flavoprotein monooxygenases ustF1 and ustF2 then participate in the modification of the side chain of S-deoxyustiloxin H, leading to the synthesis of an oxime intermediate, via ustiloxin H. Finally, carboxylative dehydration performed by the cysteine desulfurase-like protein ustD yields ustiloxin B. This is Oxidase ustYb from Aspergillus flavus (strain ATCC 200026 / FGSC A1120 / IAM 13836 / NRRL 3357 / JCM 12722 / SRRC 167).